The following is a 79-amino-acid chain: Small ribosomal subunit protein bS18 (79 aa).

It belongs to the bacterial ribosomal protein bS18 family. As to quaternary structure, part of the 30S ribosomal subunit. Forms a tight heterodimer with protein bS6.

Binds as a heterodimer with protein bS6 to the central domain of the 16S rRNA, where it helps stabilize the platform of the 30S subunit. This is Small ribosomal subunit protein bS18 from Streptococcus pneumoniae (strain Hungary19A-6).